A 408-amino-acid chain; its full sequence is LL-diaminopimelate aminotransferase (408 aa).

Substrate-binding residues include tyrosine 15 and glycine 42. Pyridoxal 5'-phosphate-binding positions include tyrosine 72, 108 to 109 (SK), tyrosine 132, asparagine 187, tyrosine 218, and 246 to 248 (SFS). 3 residues coordinate substrate: lysine 109, tyrosine 132, and asparagine 187. The residue at position 249 (lysine 249) is an N6-(pyridoxal phosphate)lysine. Pyridoxal 5'-phosphate contacts are provided by arginine 257 and asparagine 292. Substrate is bound by residues asparagine 292 and arginine 388.

This sequence belongs to the class-I pyridoxal-phosphate-dependent aminotransferase family. LL-diaminopimelate aminotransferase subfamily. As to quaternary structure, homodimer. Requires pyridoxal 5'-phosphate as cofactor.

It catalyses the reaction (2S,6S)-2,6-diaminopimelate + 2-oxoglutarate = (S)-2,3,4,5-tetrahydrodipicolinate + L-glutamate + H2O + H(+). The protein operates within amino-acid biosynthesis; L-lysine biosynthesis via DAP pathway; LL-2,6-diaminopimelate from (S)-tetrahydrodipicolinate (aminotransferase route): step 1/1. Involved in the synthesis of meso-diaminopimelate (m-DAP or DL-DAP), required for both lysine and peptidoglycan biosynthesis. Catalyzes the direct conversion of tetrahydrodipicolinate to LL-diaminopimelate. The chain is LL-diaminopimelate aminotransferase from Prochlorococcus marinus (strain MIT 9515).